A 446-amino-acid polypeptide reads, in one-letter code: Divalent metal cation transporter MntH (446 aa).

Helical transmembrane passes span 32 to 52, 59 to 79, 107 to 127, 139 to 159, 168 to 188, 210 to 230, 264 to 284, 303 to 323, 355 to 375, 381 to 401, and 420 to 440; these read FSFLGPGLLVAVGYMDPGNWI, AQFGYILLFVILLSSLSAMLL, AFVFWIIAELAIIATDIAEVI, IPLLVGALITVFDVFLLLFIM, AIVGTLIFTVLVIFVFEVFIA, GALFIALGIIGATIMPHNLYL, SIAFIVNCLLLVLGAALFFGV, PLLGASLGAIMSTLFAIALLA, LITRLIAILPIIICLIVFNSN, QLLVFSQVFLSLALPFSLIPL, and VNIISWCLIIILSILNIYLII.

The protein belongs to the NRAMP family.

The protein localises to the cell membrane. In terms of biological role, h(+)-stimulated, divalent metal cation uptake system. This is Divalent metal cation transporter MntH from Staphylococcus saprophyticus subsp. saprophyticus (strain ATCC 15305 / DSM 20229 / NCIMB 8711 / NCTC 7292 / S-41).